The sequence spans 321 residues: Torsin-2A (321 aa).

The first 26 residues, 1–26 (MAVARHGYRPWGSILGLLGLALAAAA), serve as a signal peptide directing secretion. 93-100 (GWTGTGKS) contributes to the ATP binding site. Asn149 is a glycosylation site (N-linked (GlcNAc...) asparagine).

It belongs to the ClpA/ClpB family. Torsin subfamily. In terms of assembly, homohexamer. Interacts with TOR1AIP1. In terms of processing, N-glycosylated. As to expression, expressed at similar levels in liver, muscle and brain (at protein level).

Its subcellular location is the endoplasmic reticulum lumen. This chain is Torsin-2A (Tor2a), found in Mus musculus (Mouse).